Consider the following 84-residue polypeptide: U8-theraphotoxin-Hhn1e (84 aa).

The signal sequence occupies residues 1–21 (MKVVLLVCLVWMMAMMELVSC). Disulfide bonds link C23/C35, C29/C44, C34/C67, C54/C75, and C69/C81.

It belongs to the AVIT (prokineticin) family. Expressed by the venom gland.

It localises to the secreted. In Cyriopagopus hainanus (Chinese bird spider), this protein is U8-theraphotoxin-Hhn1e.